A 233-amino-acid polypeptide reads, in one-letter code: Cysteine-rich venom protein LIO1 (233 aa).

The N-terminal stretch at 1–18 is a signal peptide; the sequence is MIVFILLSFAAVLQQSFG. Residues 37 to 165 enclose the SCP domain; sequence VDTHNSYRRS…PYNYFYVCQY (129 aa). 7 disulfide bridges follow: cysteine 74–cysteine 152, cysteine 91–cysteine 166, cysteine 147–cysteine 163, cysteine 185–cysteine 192, cysteine 188–cysteine 197, cysteine 210–cysteine 228, and cysteine 219–cysteine 232. Residues 201-233 enclose the ShKT domain; sequence CTSENVFTNCNDMVKESGCQDERMKSICPASCF.

Belongs to the CRISP family. In terms of tissue distribution, expressed by the venom gland.

The protein resides in the secreted. In terms of biological role, blocks contraction of smooth muscle elicited by high potassium-induced depolarization, but does not block caffeine-stimulated contraction. May target voltage-gated calcium channels on smooth muscle. The protein is Cysteine-rich venom protein LIO1 of Erythrolamprus poecilogyrus (Water snake).